We begin with the raw amino-acid sequence, 523 residues long: Cysteine-rich secretory protein LCCL domain-containing 1 (523 aa).

The signal sequence occupies residues Met1–Ala23. Positions Leu66 to Tyr206 constitute an SCP domain. The interval Glu246 to Ser298 is disordered. The span at Gln269–Ser288 shows a compositional bias: polar residues. LCCL domains are found at residues Met302 to Phe397 and Thr403 to Gln505. Disulfide bonds link Cys308–Cys326, Cys330–Cys350, Cys409–Cys431, and Cys435–Cys458.

This sequence belongs to the CRISP family.

It is found in the secreted. The sequence is that of Cysteine-rich secretory protein LCCL domain-containing 1 (CRISPLD1) from Gallus gallus (Chicken).